The sequence spans 970 residues: uncharacterized protein (970 aa).

The chain crosses the membrane as a helical span at residues 12 to 32; the sequence is VIFFSVFFVIFFLFIESSVGF.

The protein to E.coli YtfN.

It localises to the membrane. This is an uncharacterized protein from Buchnera aphidicola subsp. Acyrthosiphon pisum (strain APS) (Acyrthosiphon pisum symbiotic bacterium).